The chain runs to 135 residues: Ribosome-binding factor A (135 aa).

It belongs to the RbfA family. As to quaternary structure, monomer. Binds 30S ribosomal subunits, but not 50S ribosomal subunits or 70S ribosomes.

It localises to the cytoplasm. Functionally, one of several proteins that assist in the late maturation steps of the functional core of the 30S ribosomal subunit. Associates with free 30S ribosomal subunits (but not with 30S subunits that are part of 70S ribosomes or polysomes). Required for efficient processing of 16S rRNA. May interact with the 5'-terminal helix region of 16S rRNA. In Dinoroseobacter shibae (strain DSM 16493 / NCIMB 14021 / DFL 12), this protein is Ribosome-binding factor A.